The primary structure comprises 134 residues: MAKEFGRADRVAQQIQREIAVILQREVKDPRVGMVTVSDVELTRDLQHAKIFVTFFLNEVDDIEAGVKVLNDASGYIRILMGKAMKLRVVPEIRFVYDKTLVEGMRISNLVTNTVRDDQLRRGESPDQNEEDRD.

Belongs to the RbfA family. In terms of assembly, monomer. Binds 30S ribosomal subunits, but not 50S ribosomal subunits or 70S ribosomes.

The protein resides in the cytoplasm. Its function is as follows. One of several proteins that assist in the late maturation steps of the functional core of the 30S ribosomal subunit. Associates with free 30S ribosomal subunits (but not with 30S subunits that are part of 70S ribosomes or polysomes). Required for efficient processing of 16S rRNA. May interact with the 5'-terminal helix region of 16S rRNA. The polypeptide is Ribosome-binding factor A (Tolumonas auensis (strain DSM 9187 / NBRC 110442 / TA 4)).